The following is a 264-amino-acid chain: 3'-5' ssDNA/RNA exonuclease TatD (264 aa).

A divalent metal cation-binding residues include E92, H128, and H153.

The protein belongs to the metallo-dependent hydrolases superfamily. TatD-type hydrolase family. TatD subfamily. Monomer. The cofactor is Mg(2+).

Its subcellular location is the cytoplasm. Its function is as follows. 3'-5' exonuclease that prefers single-stranded DNA and RNA. May play a role in the H(2)O(2)-induced DNA damage repair. This is 3'-5' ssDNA/RNA exonuclease TatD from Musicola paradisiaca (strain Ech703) (Dickeya paradisiaca).